A 408-amino-acid chain; its full sequence is MKDVLERFLGYIKVDTQSSEESDTVPTTKTQLEFAKKLGEELKAIGLKDVSVDENGYVMATLESNIDKKVPTIGFIAHMDTSPDLSGTNINPRIVEKYDGQDIVLNKEKNIVLKINEFPEILEYKGQDIVVTDGNTLLGADDKAGIAEIITAMEYLINHPEIKHGTIKVGFTPDEEVGKGADHFDVKKFGADLAYTLDGGGIGELECETFNAAKAKVIIEGRNVHPGSAKNKMTNAVLVANKFINMLPENEVPERTEGYEGFFHLLSVKSEVETAELNYIIRDFDRKKFEERKEQIKEVGKKINEEYNKEIVCVKVEDQYYNMKEKIDEVKYVVDIAHDAMKAIDIEPILVPIRGGTDGSRLSFMGLPTPNLFAGGHNFHGRFEFVPVLSMEKAAELVVKIAELYANR.

Residue histidine 78 participates in Zn(2+) binding. Aspartate 80 is a catalytic residue. Aspartate 141 provides a ligand contact to Zn(2+). Glutamate 175 acts as the Proton acceptor in catalysis. 3 residues coordinate Zn(2+): glutamate 176, aspartate 198, and histidine 380.

The protein belongs to the peptidase M20B family. The cofactor is Zn(2+).

It localises to the cytoplasm. It carries out the reaction Release of the N-terminal residue from a tripeptide.. Its function is as follows. Cleaves the N-terminal amino acid of tripeptides. The chain is Peptidase T from Clostridium botulinum (strain Kyoto / Type A2).